The primary structure comprises 229 residues: uncharacterized protein (229 aa).

The next 7 helical transmembrane spans lie at 6–26, 36–56, 80–99, 114–134, 144–164, 174–194, and 207–224; these read LFFVSYVLYGLGFVSLIFLPT, LVSVIIGLIANYEMKFNILLA, SVYDVFCHTIMMMLCYHRIY, VLSVLFILGAMINCLVSHLII, IFEYTTIFQAVSTGYWVATML, FYYHWLLWITLMTTNWFIYKF, and YVEAVFIICTWYSGVLSS.

This sequence belongs to the mimivirus L68/R809 family.

Its subcellular location is the membrane. This is an uncharacterized protein from Acanthamoeba polyphaga (Amoeba).